The primary structure comprises 62 residues: Photosystem II reaction center protein Z (62 aa).

A run of 2 helical transmembrane segments spans residues 8–28 (AVFALIATSSILLISVPVVFA) and 41–61 (FSGTSLWIGLVFLVGILNSLI).

The protein belongs to the PsbZ family. PSII is composed of 1 copy each of membrane proteins PsbA, PsbB, PsbC, PsbD, PsbE, PsbF, PsbH, PsbI, PsbJ, PsbK, PsbL, PsbM, PsbT, PsbY, PsbZ, Psb30/Ycf12, at least 3 peripheral proteins of the oxygen-evolving complex and a large number of cofactors. It forms dimeric complexes.

The protein localises to the plastid. The protein resides in the chloroplast thylakoid membrane. In terms of biological role, may control the interaction of photosystem II (PSII) cores with the light-harvesting antenna, regulates electron flow through the 2 photosystem reaction centers. PSII is a light-driven water plastoquinone oxidoreductase, using light energy to abstract electrons from H(2)O, generating a proton gradient subsequently used for ATP formation. In Jasminum nudiflorum (Winter jasmine), this protein is Photosystem II reaction center protein Z.